We begin with the raw amino-acid sequence, 122 residues long: Large ribosomal subunit protein uL18 (122 aa).

It belongs to the universal ribosomal protein uL18 family. As to quaternary structure, part of the 50S ribosomal subunit; part of the 5S rRNA/L5/L18/L25 subcomplex. Contacts the 5S and 23S rRNAs.

In terms of biological role, this is one of the proteins that bind and probably mediate the attachment of the 5S RNA into the large ribosomal subunit, where it forms part of the central protuberance. The chain is Large ribosomal subunit protein uL18 from Geobacter sp. (strain M21).